The primary structure comprises 122 residues: uncharacterized protein (122 aa).

Over residues M1 to R15 the composition is skewed to basic and acidic residues. Residues M1–S49 form a disordered region. Low complexity predominate over residues L16–P32.

This is an uncharacterized protein from Homo sapiens (Human).